The sequence spans 71 residues: ATP synthase subunit c (71 aa).

Helical transmembrane passes span 4-24 and 48-68; these read AVIGAGIAVLTGLGAGIGIGI and IIGAGLAEATAIYGLIIAFMI.

This sequence belongs to the ATPase C chain family. As to quaternary structure, F-type ATPases have 2 components, F(1) - the catalytic core - and F(0) - the membrane proton channel. F(1) has five subunits: alpha(3), beta(3), gamma(1), delta(1), epsilon(1). F(0) has three main subunits: a(1), b(2) and c(10-14). The alpha and beta chains form an alternating ring which encloses part of the gamma chain. F(1) is attached to F(0) by a central stalk formed by the gamma and epsilon chains, while a peripheral stalk is formed by the delta and b chains.

The protein resides in the cell membrane. F(1)F(0) ATP synthase produces ATP from ADP in the presence of a proton or sodium gradient. F-type ATPases consist of two structural domains, F(1) containing the extramembraneous catalytic core and F(0) containing the membrane proton channel, linked together by a central stalk and a peripheral stalk. During catalysis, ATP synthesis in the catalytic domain of F(1) is coupled via a rotary mechanism of the central stalk subunits to proton translocation. Functionally, key component of the F(0) channel; it plays a direct role in translocation across the membrane. A homomeric c-ring of between 10-14 subunits forms the central stalk rotor element with the F(1) delta and epsilon subunits. In Clostridium botulinum (strain Alaska E43 / Type E3), this protein is ATP synthase subunit c.